We begin with the raw amino-acid sequence, 734 residues long: Photosystem I P700 chlorophyll a apoprotein A2 (734 aa).

Transmembrane regions (helical) follow at residues 46–69 (IFAS…FHVA), 135–158 (LYTG…LHLQ), 175–199 (LNHH…HVAI), 273–291 (IAHH…GHMY), 330–353 (IHFQ…QHMY), 369–395 (AALY…IFFI), 417–439 (AIIS…LYVH), and 517–535 (FLVH…LILV). Residues Cys559 and Cys568 each contribute to the [4Fe-4S] cluster site. Helical transmembrane passes span 575-596 (AFYL…YWHW) and 643-665 (LSVW…MFLI). Residues His654, Met662, and Tyr670 each contribute to the chlorophyll a site. Residue Trp671 coordinates phylloquinone. Residues 707-727 (LVGLAHFSVGYIFTYAAFLIA) traverse the membrane as a helical segment.

It belongs to the PsaA/PsaB family. The PsaA/B heterodimer binds the P700 chlorophyll special pair and subsequent electron acceptors. PSI consists of a core antenna complex that captures photons, and an electron transfer chain that converts photonic excitation into a charge separation. The eukaryotic PSI reaction center is composed of at least 11 subunits. P700 is a chlorophyll a/chlorophyll a' dimer, A0 is one or more chlorophyll a, A1 is one or both phylloquinones and FX is a shared 4Fe-4S iron-sulfur center. is required as a cofactor.

It localises to the plastid. It is found in the chloroplast thylakoid membrane. It carries out the reaction reduced [plastocyanin] + hnu + oxidized [2Fe-2S]-[ferredoxin] = oxidized [plastocyanin] + reduced [2Fe-2S]-[ferredoxin]. Functionally, psaA and PsaB bind P700, the primary electron donor of photosystem I (PSI), as well as the electron acceptors A0, A1 and FX. PSI is a plastocyanin-ferredoxin oxidoreductase, converting photonic excitation into a charge separation, which transfers an electron from the donor P700 chlorophyll pair to the spectroscopically characterized acceptors A0, A1, FX, FA and FB in turn. Oxidized P700 is reduced on the lumenal side of the thylakoid membrane by plastocyanin. The sequence is that of Photosystem I P700 chlorophyll a apoprotein A2 from Aethionema cordifolium (Lebanon stonecress).